A 63-amino-acid polypeptide reads, in one-letter code: uncharacterized protein (63 aa).

Positions 1-21 (MYLSLLLILLAWTLWLGNSLA) are cleaved as a signal peptide.

This is an uncharacterized protein from Haemophilus influenzae (strain ATCC 51907 / DSM 11121 / KW20 / Rd).